The following is a 252-amino-acid chain: 2-succinyl-6-hydroxy-2,4-cyclohexadiene-1-carboxylate synthase (252 aa).

The protein belongs to the AB hydrolase superfamily. MenH family. Monomer.

The catalysed reaction is 5-enolpyruvoyl-6-hydroxy-2-succinyl-cyclohex-3-ene-1-carboxylate = (1R,6R)-6-hydroxy-2-succinyl-cyclohexa-2,4-diene-1-carboxylate + pyruvate. It functions in the pathway quinol/quinone metabolism; 1,4-dihydroxy-2-naphthoate biosynthesis; 1,4-dihydroxy-2-naphthoate from chorismate: step 3/7. Its pathway is quinol/quinone metabolism; menaquinone biosynthesis. Catalyzes a proton abstraction reaction that results in 2,5-elimination of pyruvate from 2-succinyl-5-enolpyruvyl-6-hydroxy-3-cyclohexene-1-carboxylate (SEPHCHC) and the formation of 2-succinyl-6-hydroxy-2,4-cyclohexadiene-1-carboxylate (SHCHC). The chain is 2-succinyl-6-hydroxy-2,4-cyclohexadiene-1-carboxylate synthase from Escherichia coli O157:H7.